A 174-amino-acid polypeptide reads, in one-letter code: Gamma-crystallin D (174 aa).

2 Beta/gamma crystallin 'Greek key' domains span residues 2 to 40 (GKIT…RVDS) and 41 to 83 (GCWM…RIIP). The interval 84 to 87 (YSGS) is connecting peptide. Beta/gamma crystallin 'Greek key' domains follow at residues 88–128 (HKMR…NVLD) and 129–171 (GCWI…RRVI).

Belongs to the beta/gamma-crystallin family. As to quaternary structure, monomer.

Crystallins are the dominant structural components of the vertebrate eye lens. This Macropus fuliginosus (Western gray kangaroo) protein is Gamma-crystallin D (CRYGD).